Here is a 541-residue protein sequence, read N- to C-terminus: Glucans biosynthesis protein D (541 aa).

The tat-type signal signal peptide spans 1-29 (MHRRNLLKASMAIAAYTGLSASGLLAAQA).

Belongs to the OpgD/OpgG family. In terms of processing, predicted to be exported by the Tat system. The position of the signal peptide cleavage has not been experimentally proven.

It is found in the periplasm. It participates in glycan metabolism; osmoregulated periplasmic glucan (OPG) biosynthesis. Its function is as follows. Probably involved in the control of the structural glucose backbone of osmoregulated periplasmic glucans (OPGs). This chain is Glucans biosynthesis protein D, found in Pseudomonas fluorescens (strain SBW25).